A 216-amino-acid polypeptide reads, in one-letter code: Probable GTP-binding protein EngB (216 aa).

Residues D30 to L204 form the EngB-type G domain. Residues G38–S45, G64–L68, D82–G85, T149–D152, and L182–A185 contribute to the GTP site. Positions 45 and 66 each coordinate Mg(2+).

This sequence belongs to the TRAFAC class TrmE-Era-EngA-EngB-Septin-like GTPase superfamily. EngB GTPase family. Requires Mg(2+) as cofactor.

Functionally, necessary for normal cell division and for the maintenance of normal septation. The polypeptide is Probable GTP-binding protein EngB (Azotobacter vinelandii (strain DJ / ATCC BAA-1303)).